Reading from the N-terminus, the 1407-residue chain is DNA-directed RNA polymerase subunit beta' (1407 aa).

Zn(2+)-binding residues include cysteine 70, cysteine 72, cysteine 85, and cysteine 88. The Mg(2+) site is built by aspartate 460, aspartate 462, and aspartate 464. 4 residues coordinate Zn(2+): cysteine 814, cysteine 888, cysteine 895, and cysteine 898. Lysine 972 bears the N6-acetyllysine mark.

The protein belongs to the RNA polymerase beta' chain family. As to quaternary structure, the RNAP catalytic core consists of 2 alpha, 1 beta, 1 beta' and 1 omega subunit. When a sigma factor is associated with the core the holoenzyme is formed, which can initiate transcription. It depends on Mg(2+) as a cofactor. Zn(2+) is required as a cofactor.

It carries out the reaction RNA(n) + a ribonucleoside 5'-triphosphate = RNA(n+1) + diphosphate. Functionally, DNA-dependent RNA polymerase catalyzes the transcription of DNA into RNA using the four ribonucleoside triphosphates as substrates. This chain is DNA-directed RNA polymerase subunit beta', found in Shigella boydii serotype 18 (strain CDC 3083-94 / BS512).